The chain runs to 185 residues: uncharacterized protein (185 aa).

The protein belongs to the PIGL family.

This is an uncharacterized protein from Escherichia coli (strain K12).